Reading from the N-terminus, the 583-residue chain is Membrane protein insertase YidC (583 aa).

Helical transmembrane passes span 5–25 (SVTGLAIIAVIMIVWLQFMSP), 341–361 (PFAEFIILPVFSWMNGFVSNY), 362–382 (GLIIIIFAFLIKLVTYPLSMA), 427–447 (IGGCLPVVLQMPLLFAMFYVF), 473–493 (FGFAIPMYGSHIAVFPILMAV), and 520–540 (AMMLLFFNNMPAGLGLYYLMF).

The protein belongs to the OXA1/ALB3/YidC family. Type 1 subfamily. Interacts with the Sec translocase complex via SecD. Specifically interacts with transmembrane segments of nascent integral membrane proteins during membrane integration.

Its subcellular location is the cell inner membrane. Its function is as follows. Required for the insertion and/or proper folding and/or complex formation of integral membrane proteins into the membrane. Involved in integration of membrane proteins that insert both dependently and independently of the Sec translocase complex, as well as at least some lipoproteins. Aids folding of multispanning membrane proteins. This chain is Membrane protein insertase YidC, found in Pelodictyon phaeoclathratiforme (strain DSM 5477 / BU-1).